Reading from the N-terminus, the 410-residue chain is Regulator of microtubule dynamics protein 2 (410 aa).

The helical transmembrane segment at leucine 9 to histidine 28 threads the bilayer. Serine 51 carries the phosphoserine modification. Residues glutamine 69–glutamate 110 adopt a coiled-coil conformation. Residues isoleucine 120 to glycine 151 form a disordered region. A Phosphoserine modification is found at serine 121. The segment covering serine 121–glycine 131 has biased composition (basic residues). A Phosphothreonine modification is found at threonine 139. Tyrosine 152 is subject to Phosphotyrosine. Phosphothreonine is present on residues threonine 154 and threonine 157.

It belongs to the RMDN family. As to quaternary structure, interacts with microtubules.

It localises to the membrane. It is found in the cytoplasm. The protein localises to the cytoskeleton. The protein resides in the spindle. Its subcellular location is the spindle pole. The protein is Regulator of microtubule dynamics protein 2 (Rmdn2) of Mus musculus (Mouse).